Reading from the N-terminus, the 238-residue chain is Accessory gene regulator A (238 aa).

One can recognise a Response regulatory domain in the interval 2-125 (KIFICEDDPK…LRTRIIDCLE (124 aa)). 4-aspartylphosphate is present on D59. Residues 143–238 (IELKRGSNSV…YASVRNVKKI (96 aa)) form the HTH LytTR-type domain.

It is found in the cytoplasm. Required for high-level post-exponential phase expression of a series of secreted proteins. This Staphylococcus aureus (strain COL) protein is Accessory gene regulator A (agrA).